We begin with the raw amino-acid sequence, 304 residues long: N-acetyl-D-glucosamine kinase (304 aa).

Residues 4 to 11 (GFDMGGTK) and 133 to 140 (GVGGGLIV) each bind ATP. Zn(2+) is bound by residues His157, Cys177, Cys179, and Cys184.

The protein belongs to the ROK (NagC/XylR) family. NagK subfamily.

It carries out the reaction N-acetyl-D-glucosamine + ATP = N-acetyl-D-glucosamine 6-phosphate + ADP + H(+). Its pathway is cell wall biogenesis; peptidoglycan recycling. Functionally, catalyzes the phosphorylation of N-acetyl-D-glucosamine (GlcNAc) derived from cell-wall degradation, yielding GlcNAc-6-P. This Yersinia pseudotuberculosis serotype O:1b (strain IP 31758) protein is N-acetyl-D-glucosamine kinase.